The primary structure comprises 211 residues: MYQPEFPPVPFRLGLYPVVDSVQWIERLLDAGVRTLQLRIKDRRDEEVEADVVAAIALGRRYNARLFINDYWRLAIKHQAYGVHLGQEDLQATDLSAIRAAGLRLGVSTHDDMEIDVALAARPSYIALGHVFPTQTKQMPSAPQGLEQLARHVERLADYPTVAIGGISLARAPAVIATGVGSIAVVSAITQAADWRLATAQLLEIAGVGDE.

4-amino-2-methyl-5-(diphosphooxymethyl)pyrimidine is bound by residues 37-41 (QLRIK) and Asn69. Asp70 and Asp89 together coordinate Mg(2+). Residue Ser108 participates in 4-amino-2-methyl-5-(diphosphooxymethyl)pyrimidine binding. Residue 134–136 (TQT) coordinates 2-[(2R,5Z)-2-carboxy-4-methylthiazol-5(2H)-ylidene]ethyl phosphate. 4-amino-2-methyl-5-(diphosphooxymethyl)pyrimidine is bound at residue Lys137. 2-[(2R,5Z)-2-carboxy-4-methylthiazol-5(2H)-ylidene]ethyl phosphate-binding positions include Gly166 and 186–187 (VS).

Belongs to the thiamine-phosphate synthase family. It depends on Mg(2+) as a cofactor.

The enzyme catalyses 2-[(2R,5Z)-2-carboxy-4-methylthiazol-5(2H)-ylidene]ethyl phosphate + 4-amino-2-methyl-5-(diphosphooxymethyl)pyrimidine + 2 H(+) = thiamine phosphate + CO2 + diphosphate. The catalysed reaction is 2-(2-carboxy-4-methylthiazol-5-yl)ethyl phosphate + 4-amino-2-methyl-5-(diphosphooxymethyl)pyrimidine + 2 H(+) = thiamine phosphate + CO2 + diphosphate. It carries out the reaction 4-methyl-5-(2-phosphooxyethyl)-thiazole + 4-amino-2-methyl-5-(diphosphooxymethyl)pyrimidine + H(+) = thiamine phosphate + diphosphate. It functions in the pathway cofactor biosynthesis; thiamine diphosphate biosynthesis; thiamine phosphate from 4-amino-2-methyl-5-diphosphomethylpyrimidine and 4-methyl-5-(2-phosphoethyl)-thiazole: step 1/1. Its function is as follows. Condenses 4-methyl-5-(beta-hydroxyethyl)thiazole monophosphate (THZ-P) and 2-methyl-4-amino-5-hydroxymethyl pyrimidine pyrophosphate (HMP-PP) to form thiamine monophosphate (TMP). This chain is Thiamine-phosphate synthase, found in Escherichia coli O1:K1 / APEC.